The primary structure comprises 393 residues: NAD(P)H-quinone oxidoreductase subunit H, chloroplastic (393 aa).

This sequence belongs to the complex I 49 kDa subunit family. In terms of assembly, NDH is composed of at least 16 different subunits, 5 of which are encoded in the nucleus.

The protein resides in the plastid. Its subcellular location is the chloroplast thylakoid membrane. It catalyses the reaction a plastoquinone + NADH + (n+1) H(+)(in) = a plastoquinol + NAD(+) + n H(+)(out). It carries out the reaction a plastoquinone + NADPH + (n+1) H(+)(in) = a plastoquinol + NADP(+) + n H(+)(out). NDH shuttles electrons from NAD(P)H:plastoquinone, via FMN and iron-sulfur (Fe-S) centers, to quinones in the photosynthetic chain and possibly in a chloroplast respiratory chain. The immediate electron acceptor for the enzyme in this species is believed to be plastoquinone. Couples the redox reaction to proton translocation, and thus conserves the redox energy in a proton gradient. The polypeptide is NAD(P)H-quinone oxidoreductase subunit H, chloroplastic (Lepidium virginicum (Virginia pepperweed)).